The chain runs to 265 residues: Ribosomal RNA small subunit methyltransferase G (265 aa).

Residues glycine 75, leucine 80, and arginine 145 each coordinate S-adenosyl-L-methionine. The segment at 212 to 265 (RAVRSSQRTRAESRGGRGDGERHDGRQVRRTSRDSLRSREVGRDQPTRGQSRST) is disordered. Positions 220 to 257 (TRAESRGGRGDGERHDGRQVRRTSRDSLRSREVGRDQP) are enriched in basic and acidic residues.

The protein belongs to the methyltransferase superfamily. RNA methyltransferase RsmG family.

It is found in the cytoplasm. Its function is as follows. Specifically methylates the N7 position of guanine in position 518 of 16S rRNA. The polypeptide is Ribosomal RNA small subunit methyltransferase G (Frankia casuarinae (strain DSM 45818 / CECT 9043 / HFP020203 / CcI3)).